We begin with the raw amino-acid sequence, 1790 residues long: Protein FAM186A (1790 aa).

This sequence belongs to the FAM186 family.

The sequence is that of Protein FAM186A (FAM186A) from Mus musculus (Mouse).